The sequence spans 508 residues: Light-independent protochlorophyllide reductase subunit B (508 aa).

Residue Asp-36 participates in [4Fe-4S] cluster binding. The active-site Proton donor is the Asp-294. 429-430 is a binding site for substrate; sequence GM.

Belongs to the ChlB/BchB/BchZ family. Protochlorophyllide reductase is composed of three subunits; ChlL, ChlN and ChlB. Forms a heterotetramer of two ChlB and two ChlN subunits. [4Fe-4S] cluster serves as cofactor.

It catalyses the reaction chlorophyllide a + oxidized 2[4Fe-4S]-[ferredoxin] + 2 ADP + 2 phosphate = protochlorophyllide a + reduced 2[4Fe-4S]-[ferredoxin] + 2 ATP + 2 H2O. The protein operates within porphyrin-containing compound metabolism; chlorophyll biosynthesis (light-independent). Its function is as follows. Component of the dark-operative protochlorophyllide reductase (DPOR) that uses Mg-ATP and reduced ferredoxin to reduce ring D of protochlorophyllide (Pchlide) to form chlorophyllide a (Chlide). This reaction is light-independent. The NB-protein (ChlN-ChlB) is the catalytic component of the complex. This Acaryochloris marina (strain MBIC 11017) protein is Light-independent protochlorophyllide reductase subunit B.